Reading from the N-terminus, the 208-residue chain is Sodium/potassium-transporting ATPase subunit beta-1-interacting protein 2 (208 aa).

Helical transmembrane passes span 1–23 (MGYC…CVLE), 35–55 (APIL…FGTI), 62–82 (ITGY…VICF), and 153–173 (LQIV…KCIT).

It belongs to the NKAIN family. In terms of assembly, interacts with ATP1B1. As to expression, expressed in fetal brain. Weakly expressed in adult brain and thymus. Not expressed in any other normal tissue examined.

It localises to the cell membrane. The sequence is that of Sodium/potassium-transporting ATPase subunit beta-1-interacting protein 2 (NKAIN2) from Homo sapiens (Human).